The primary structure comprises 241 residues: 2,3,4,5-tetrahydropyridine-2,6-dicarboxylate N-acetyltransferase (241 aa).

This sequence belongs to the transferase hexapeptide repeat family. DapH subfamily.

It catalyses the reaction (S)-2,3,4,5-tetrahydrodipicolinate + acetyl-CoA + H2O = L-2-acetamido-6-oxoheptanedioate + CoA. It participates in amino-acid biosynthesis; L-lysine biosynthesis via DAP pathway; LL-2,6-diaminopimelate from (S)-tetrahydrodipicolinate (acetylase route): step 1/3. In terms of biological role, catalyzes the transfer of an acetyl group from acetyl-CoA to tetrahydrodipicolinate. The sequence is that of 2,3,4,5-tetrahydropyridine-2,6-dicarboxylate N-acetyltransferase from Thermoanaerobacter sp. (strain X514).